Consider the following 137-residue polypeptide: Glutamyl-tRNA(Gln) amidotransferase subunit C, chloroplastic/mitochondrial (137 aa).

The protein belongs to the GatC family. In terms of assembly, subunit of the heterotrimeric GatCAB amidotransferase (AdT) complex, composed of A, B and C subunits.

It is found in the mitochondrion. The protein localises to the plastid. It localises to the chloroplast. The catalysed reaction is L-glutamyl-tRNA(Gln) + L-glutamine + ATP + H2O = L-glutaminyl-tRNA(Gln) + L-glutamate + ADP + phosphate + H(+). Its function is as follows. Allows the formation of correctly charged Gln-tRNA(Gln) through the transamidation of misacylated Glu-tRNA(Gln) in chloroplasts and mitochondria. The reaction takes place in the presence of glutamine and ATP through an activated gamma-phospho-Glu-tRNA(Gln). In Vitis vinifera (Grape), this protein is Glutamyl-tRNA(Gln) amidotransferase subunit C, chloroplastic/mitochondrial.